Reading from the N-terminus, the 1342-residue chain is DNA-directed RNA polymerase subunit beta (1342 aa).

Belongs to the RNA polymerase beta chain family. In terms of assembly, the RNAP catalytic core consists of 2 alpha, 1 beta, 1 beta' and 1 omega subunit. When a sigma factor is associated with the core the holoenzyme is formed, which can initiate transcription.

It carries out the reaction RNA(n) + a ribonucleoside 5'-triphosphate = RNA(n+1) + diphosphate. Its function is as follows. DNA-dependent RNA polymerase catalyzes the transcription of DNA into RNA using the four ribonucleoside triphosphates as substrates. The protein is DNA-directed RNA polymerase subunit beta of Aliivibrio fischeri (strain MJ11) (Vibrio fischeri).